The primary structure comprises 462 residues: GTPase Der (462 aa).

EngA-type G domains follow at residues 2–164 (KKIA…PKKE) and 195–366 (INVA…KNYS). GTP contacts are provided by residues 8–15 (GKPNVGKS), 55–59 (DTGGI), 116–119 (NKID), 201–208 (GRVNVGKS), 248–252 (DTAGI), and 312–315 (NKWD). The KH-like domain maps to 367–451 (TWLPTGQLNR…PIILRPRKRG (85 aa)).

The protein belongs to the TRAFAC class TrmE-Era-EngA-EngB-Septin-like GTPase superfamily. EngA (Der) GTPase family. Associates with the 50S ribosomal subunit.

In terms of biological role, GTPase that plays an essential role in the late steps of ribosome biogenesis. The sequence is that of GTPase Der from Nitratiruptor sp. (strain SB155-2).